A 477-amino-acid chain; its full sequence is 3-succinoylsemialdehyde-pyridine dehydrogenase (477 aa).

Residue 202-208 (GDGPGVG) coordinates NAD(+). Active-site residues include E246 and C280.

The protein belongs to the aldehyde dehydrogenase family.

It catalyses the reaction 4-oxo-4-(pyridin-3-yl)butanal + NADP(+) + H2O = 4-oxo-4-(pyridin-3-yl)butanoate + NADPH + 2 H(+). The protein operates within alkaloid degradation; nicotine degradation. Its function is as follows. Catalyzes the dehydrogenation of 3-succinoylsemialdehyde-pyridine to 3-succinoyl-pyridine in the nicotine degradation pathway. The chain is 3-succinoylsemialdehyde-pyridine dehydrogenase (ald) from Pseudomonas sp.